The sequence spans 273 residues: MDDKKMAVNLRNDDLSEETKTLISSLPSDKDSTGINVCKYQGCWYTHHFLQAVLNFQKNFKPQDTNIIVASFPKCGTTWLKALTFSLVHRSKHPSHDHHHPLLSNNPHVLFSSSPRLFSTHMPSHTLQEVLKDSTCKVVYICRNMKDTLETFESFCKGVNFFGPFWDQVLSYWRRSLEDPNHVLFMRFEEMKAEPHEQIKRLAEFLDSPLLRKKKRTDCLEINKTGKLCEGRDNKTFFRKGEVGDWKNYLTPEMENKIDMIIQEKLQNSGLKF.

A 3'-phosphoadenylyl sulfate-binding site is contributed by 74–79; sequence KCGTTW. The active-site Proton acceptor is the His-121. Residues Arg-143 and 239-241 contribute to the 3'-phosphoadenylyl sulfate site; that span reads RKG.

The protein belongs to the sulfotransferase 1 family.

It localises to the cytoplasm. Its function is as follows. Sulfotransferase that utilizes 3'-phospho-5'-adenylyl sulfate (PAPS) as sulfonate donor. In Arabidopsis thaliana (Mouse-ear cress), this protein is Cytosolic sulfotransferase 4 (SOT4).